The primary structure comprises 276 residues: MTSMRKKTIGEVLRLARINQGLSLDELQKKTEIQLDMLEAMEADDFDQLPSPFYTRSFLKKYAWAVELDDQIVLDAYDSGSMITYEEVDVDEDELTGRRRSSKKKKKKTSFLPLFYFILFALSILIFVTYYVWNYIQTQPEEPSLSNYSVVQSTSSTSSVPHSSSSSSSSIESAISVSGEGNHVEIAYKTSKETVKLQLAVSDVTSWVSVSESELEGGVTLSPKKKSAEATVATKSPVTITLGVVKGVDLTVDNQTVDLSKLTAQTGQITVTFTKN.

At 1-110 (MTSMRKKTIG…SSKKKKKKTS (110 aa)) the chain is on the cytoplasmic side. Residues 111 to 131 (FLPLFYFILFALSILIFVTYY) form a helical; Signal-anchor for type II membrane protein membrane-spanning segment. The Extracellular portion of the chain corresponds to 132–276 (VWNYIQTQPE…GQITVTFTKN (145 aa)).

Belongs to the RodZ family. In terms of assembly, interacts with MltG and MreC in the elongasome. Interacts with KhpB (also called EloR/Jag).

It localises to the cell membrane. In terms of biological role, cytoskeletal protein that is involved in cell-shape control through regulation of the length of the long axis. Probably part of the elongasome which synthesizes peripheral peptidoglycan. The chain is Cytoskeleton protein RodZ from Streptococcus pneumoniae (strain ATCC BAA-255 / R6).